The chain runs to 445 residues: Phosphoglucosamine mutase (445 aa).

Ser-101 functions as the Phosphoserine intermediate in the catalytic mechanism. Mg(2+) contacts are provided by Ser-101, Asp-240, Asp-242, and Asp-244. Ser-101 carries the post-translational modification Phosphoserine.

This sequence belongs to the phosphohexose mutase family. Mg(2+) serves as cofactor. In terms of processing, activated by phosphorylation.

The catalysed reaction is alpha-D-glucosamine 1-phosphate = D-glucosamine 6-phosphate. Functionally, catalyzes the conversion of glucosamine-6-phosphate to glucosamine-1-phosphate. This chain is Phosphoglucosamine mutase, found in Pseudomonas fluorescens (strain SBW25).